Consider the following 199-residue polypeptide: UPF0301 protein Anae109_0457 (199 aa).

The protein belongs to the UPF0301 (AlgH) family.

This Anaeromyxobacter sp. (strain Fw109-5) protein is UPF0301 protein Anae109_0457.